We begin with the raw amino-acid sequence, 221 residues long: Glutathione S-transferase (221 aa).

Position 1 is an N-acetylmethionine (Met-1). Ala-2 carries the N-acetylalanine; in Glutathione S-transferase, N-terminally processed modification. Positions 3–82 (GEQNIKYFNI…YIAEKYNLLG (80 aa)) constitute a GST N-terminal domain. Glutathione-binding positions include Tyr-9, Lys-45, 53-54 (QV), and 66-67 (QT). In terms of domain architecture, GST C-terminal spans 84–208 (DMKEHAQIIM…PGSKRKPVPD (125 aa)).

This sequence belongs to the GST superfamily. Alpha family. As to quaternary structure, homodimer or heterodimer of GSTA1 and GSTA2.

It is found in the cytoplasm. The catalysed reaction is RX + glutathione = an S-substituted glutathione + a halide anion + H(+). It carries out the reaction prostaglandin A2 + glutathione = prostaglandin A2-S-(R)-glutathione. It catalyses the reaction prostaglandin J2 + glutathione = prostaglandin J2-S-(R)-glutathione. The enzyme catalyses (13S)-hydroperoxy-(9Z,11E)-octadecadienoate + 2 glutathione = (13S)-hydroxy-(9Z,11E)-octadecadienoate + glutathione disulfide + H2O. The catalysed reaction is androst-5-ene-3,17-dione = androst-4-ene-3,17-dione. In terms of biological role, glutathione S-transferase that catalyzes the nucleophilic attack of the sulfur atom of glutathione on the electrophilic groups of a wide range of exogenous and endogenous compounds. Involved in the formation of glutathione conjugates of both prostaglandin A2 (PGA2) and prostaglandin J2 (PGJ2). It also catalyzes the isomerization of D5-androstene-3,17-dione (AD) into D4-androstene-3,17-dione and may therefore play an important role in hormone biosynthesis. Through its glutathione-dependent peroxidase activity toward the fatty acid hydroperoxide (13S)-hydroperoxy-(9Z,11E)-octadecadienoate/13-HPODE it is also involved in the metabolism of oxidized linoleic acid. This chain is Glutathione S-transferase, found in Antechinus stuartii (Brown marsupial mouse).